A 564-amino-acid polypeptide reads, in one-letter code: Kelch repeat and BTB domain-containing protein 1 (564 aa).

Residues 21-88 (CDINIVINDE…IYGIPLSLTN (68 aa)) form the BTB domain. Positions 123-219 (CIDFYIYADK…SLLSPQVIKS (97 aa)) constitute a BACK domain. Kelch repeat units lie at residues 252–297 (IELI…VLDN), 298–346 (IIYM…ADDE), 347–395 (YIYC…MLNG), 397–441 (IYVI…VHDG), 442–492 (KIYI…SAHN), and 494–539 (LYVG…CEPI).

As to quaternary structure, interacts (via BTB domain) with host CUL3.

It localises to the host cytoplasm. Functionally, probable substrate-specific adapter of CUL3-containing E3 ubiquitin-protein ligases which mediate the ubiquitination and subsequent proteasomal degradation of host target proteins. The chain is Kelch repeat and BTB domain-containing protein 1 (KBTB1) from Cowpox virus (strain GRI-90 / Grishak) (CPV).